Here is a 492-residue protein sequence, read N- to C-terminus: MVARSRKRRAAPQDIYPTCKIAGNCPADIQNKFENKTIADKILQYGSLGVFFGGLGISSAGGSGGRLGYTPLSGGGGRVIAAAPVRPPITTESVGPLDIVPEVADPGGPTLVSLHELPAETPYVSSTNVTGDGAAEPLPAGHGGSQISDVTSGTSGTVSRTHINNPVFEAPMTGDQDVSDVHVFAHSESSITINQTENTGGELIEMVPLRHPPRSEGDFRETSFSTSTPIPDRSALRSINVASRRYQQVQVENPAFLNRPRELVQFENTFDNPAFVDDEQLSLLFEQDLDTVVATPDPAFQDVVRLSRPSFTQSRAGRVRVSRLGRTLTMQTRSGKAFGPAKHFYYELSSIAEGPEPDILIPESEQETSFTDATSKDTQQEAEVYADGSTLETDTSADENLTLVFSDRGRGQGSHVPIPGKSTIGGPVNIGDSKYYTLNPGETTSFEADVISPVFIFEGNADGTYYLEEPLRKKRRKSIFLLADGSVAVYAE.

The Nuclear localization signal signature appears at 2-10 (VARSRKRRA). A disulfide bridge links Cys-19 with Cys-25. The disordered stretch occupies residues 211 to 230 (HPPRSEGDFRETSFSTSTPI). Positions 473–478 (KKRRKS) match the Nuclear localization signal motif.

This sequence belongs to the papillomaviridae L2 protein family. In terms of assembly, interacts with major capsid protein L1. Interacts with E2; this interaction inhibits E2 transcriptional activity but not the DNA replication function E2. Interacts with host GADD45GIP1. Interacts with host HSPA8; this interaction is required for L2 nuclear translocation. Interacts with host importins KPNB2 and KPNB3. Forms a complex with importin alpha2-beta1 heterodimers via interaction with the importin alpha2 adapter. Interacts with host DYNLT1; this interaction is essential for virus intracellular transport during entry. Interacts (via C-terminus) with host retromer subunits VPS35 and VPS29. In terms of processing, highly phosphorylated.

It is found in the virion. Its subcellular location is the host nucleus. The protein resides in the host early endosome. The protein localises to the host Golgi apparatus. Functionally, minor protein of the capsid that localizes along the inner surface of the virion, within the central cavities beneath the L1 pentamers. Plays a role in capsid stabilization through interaction with the major capsid protein L1. Once the virion enters the host cell, L2 escorts the genomic DNA into the nucleus by promoting escape from the endosomal compartments and traffic through the host Golgi network. Mechanistically, the C-terminus of L2 possesses a cell-penetrating peptide that protudes from the host endosome, interacts with host cytoplasmic retromer cargo and thereby mediates the capsid delivery to the host trans-Golgi network. Plays a role through its interaction with host dynein in the intracellular microtubule-dependent transport of viral capsid toward the nucleus. Mediates the viral genome import into the nucleus through binding to host importins. Once within the nucleus, L2 localizes viral genomes to host PML bodies in order to activate early gene expression for establishment of infection. Later on, promotes late gene expression by interacting with the viral E2 protein and by inhibiting its transcriptional activation functions. During virion assembly, encapsidates the genome by direct interaction with the viral DNA. This chain is Minor capsid protein L2, found in Cottontail rabbit papillomavirus (strain Kansas) (CRPV).